Consider the following 231-residue polypeptide: Small ribosomal subunit protein uS3 (231 aa).

One can recognise a KH type-2 domain in the interval 39-107; sequence IRELLHKELK…DVVLNIVEIR (69 aa).

The protein belongs to the universal ribosomal protein uS3 family. In terms of assembly, part of the 30S ribosomal subunit. Forms a tight complex with proteins S10 and S14.

Its function is as follows. Binds the lower part of the 30S subunit head. Binds mRNA in the 70S ribosome, positioning it for translation. The protein is Small ribosomal subunit protein uS3 of Nitrobacter winogradskyi (strain ATCC 25391 / DSM 10237 / CIP 104748 / NCIMB 11846 / Nb-255).